We begin with the raw amino-acid sequence, 442 residues long: HTH-type transcriptional regulator NorG (442 aa).

The HTH gntR-type domain occupies 2–46 (KIPSQRQLAIQYNVNRVTIIKSIELLEAEGFIYTKVGSGTYVNDY). Residues 6 to 25 (QRQLAIQYNVNRVTIIKSIE) constitute a DNA-binding region (H-T-H motif). Position 288 is an N6-(pyridoxal phosphate)lysine (K288).

In the C-terminal section; belongs to the class-I pyridoxal-phosphate-dependent aminotransferase family. The cofactor is pyridoxal 5'-phosphate.

Positively regulates the expression of the NorB efflux pump and negatively regulates the expression of the AbcA efflux pump. Binds specifically to the promoters of norA, norB and norC and abcA genes. Could also have an aminotransferase activity. The chain is HTH-type transcriptional regulator NorG (norG) from Staphylococcus aureus (strain bovine RF122 / ET3-1).